The chain runs to 1260 residues: Myosin-1 (1260 aa).

The Myosin motor domain maps to 34 to 713 (VGVSDLTLLS…TLFALEHMRD (680 aa)). 127–134 (GESGAGKT) serves as a coordination point for ATP. S355 bears the Phosphoserine mark. Residues 402–484 (SIGILDIYGF…PGIFATLDDS (83 aa)) are actin-binding. IQ domains are found at residues 717-737 (YNMA…RIDS) and 738-763 (AIKI…YGHR). The TH1 domain occupies 769 to 959 (KERRAMSLLG…TISVRQGRPA (191 aa)). Polar residues-rich tracts occupy residues 948–963 (SSTI…NSRQ) and 972–988 (TLLS…SKGY). The tract at residues 948–1106 (SSTISVRQGR…PPPPTKQNIP (159 aa)) is disordered. A compositionally biased stretch (low complexity) spans 989–1013 (GQQQHAQPSYGQQQQQQQRYAPQSH). Residues 1030–1064 (QQNFAASAAQTAYHPQQASHARVPSTNNAHTQHNR) show a composition bias toward polar residues. The segment covering 1065-1082 (QPAQQAAQPVQQAAQPAA) has biased composition (low complexity). Residues 1092 to 1101 (APPPPPPPPT) show a composition bias toward pro residues. An SH3 domain is found at 1103–1165 (QNIPKFQAAY…PTNYIVEYKE (63 aa)).

This sequence belongs to the TRAFAC class myosin-kinesin ATPase superfamily. Myosin family. In terms of processing, phosphorylation of the TEDS site (Ser-355) is required for the polarization of the actin cytoskeleton. Phosphorylation probably activates the myosin-I ATPase activity.

The protein localises to the cytoplasm. The protein resides in the cytoskeleton. It is found in the actin patch. Its function is as follows. Type-I myosin implicated in the organization of the actin cytoskeleton. Required for proper actin cytoskeleton polarization. At the cell cortex, assembles in patch-like structures together with proteins from the actin-polymerizing machinery and promotes actin assembly. Functions as actin nucleation-promoting factor (NPF) for the Arp2/3 complex. The polypeptide is Myosin-1 (MYO1) (Kluyveromyces lactis (strain ATCC 8585 / CBS 2359 / DSM 70799 / NBRC 1267 / NRRL Y-1140 / WM37) (Yeast)).